The sequence spans 79 residues: Sec-independent protein translocase protein TatA (79 aa).

Residues 1–21 (MGGLQPWHWVIVIAVFVLLFG) traverse the membrane as a helical segment. The segment covering 43–52 (IKEMQSEGKS) has biased composition (basic and acidic residues). Residues 43 to 79 (IKEMQSEGKSDNPPATPITSERVDTNPTAEQPDKRSA) are disordered.

This sequence belongs to the TatA/E family. In terms of assembly, the Tat system comprises two distinct complexes: a TatABC complex, containing multiple copies of TatA, TatB and TatC subunits, and a separate TatA complex, containing only TatA subunits. Substrates initially bind to the TatABC complex, which probably triggers association of the separate TatA complex to form the active translocon.

Its subcellular location is the cell membrane. In terms of biological role, part of the twin-arginine translocation (Tat) system that transports large folded proteins containing a characteristic twin-arginine motif in their signal peptide across membranes. TatA could form the protein-conducting channel of the Tat system. The sequence is that of Sec-independent protein translocase protein TatA from Mycobacterium sp. (strain JLS).